A 465-amino-acid chain; its full sequence is MAKKAPDVGDYKYGFHDDDVSIFRSERGLTENIVREISNMKNEPEWMLDFRLKSLKLFYKMPMPQWGGDLSELNFDDITYYVKPSEQAERSWDEVPEEIKRTFDKLGIPEAEQKYLAGVSAQYESEVVYHNMEKELEEKGIIFKDTDSALQENEELFKKYFASVVPAADNKFAALNSAVWSGGSFIYVPKNIKLDTPLQAYFRINSENMGQFERTLIIADEGASVHYIEGCTAPVYTTSSLHSAVVEIIVHKDAHVRYTTIQNWANNVYNLVTKRTFVYENGNMEWVDGNLGSKLTMKYPNCVLLGEGAKGSTLSIAFAGKGQVQDAGAKMIHKAPNTSSTIVSKSISKNGGKVIYRGIVHFGRKAKGARSNIECDTLILDNESTSDTIPYNEVFNDQISLEHEAKVSKVSEEQLFYLMSRGISEEEATEMIVMGFIEPFTKELPMEYAVEMNRLIKFEMEGSIG.

It belongs to the iron-sulfur cluster assembly SufBD family.

The chain is Iron-sulfur cluster assembly SufBD family protein SAR0880 from Staphylococcus aureus (strain MRSA252).